A 178-amino-acid polypeptide reads, in one-letter code: Bifunctional protein PyrR (178 aa).

Positions 99–111 (VILVDDVLFTGRT) match the PRPP-binding motif.

It belongs to the purine/pyrimidine phosphoribosyltransferase family. PyrR subfamily. In terms of assembly, homodimer and homohexamer; in equilibrium.

The enzyme catalyses UMP + diphosphate = 5-phospho-alpha-D-ribose 1-diphosphate + uracil. In terms of biological role, regulates transcriptional attenuation of the pyrimidine nucleotide (pyr) operon by binding in a uridine-dependent manner to specific sites on pyr mRNA. This disrupts an antiterminator hairpin in the RNA and favors formation of a downstream transcription terminator, leading to a reduced expression of downstream genes. Also displays a weak uracil phosphoribosyltransferase activity which is not physiologically significant. This Ligilactobacillus salivarius (strain UCC118) (Lactobacillus salivarius) protein is Bifunctional protein PyrR.